Consider the following 137-residue polypeptide: DNA polymerase III subunit psi (137 aa).

The protein belongs to the DNA polymerase III psi/HolD chain family. In terms of assembly, the DNA polymerase III holoenzyme complex contains at least 10 different subunits organized into 3 functionally essential subassemblies: the Pol III core, the beta sliding clamp processivity factor and the clamp-loading complex. The Pol III core (subunits alpha, epsilon and theta) contains the polymerase and the 3'-5' exonuclease proofreading activities. The polymerase is tethered to the template via the dimeric beta sliding clamp processivity factor. The clamp-loading complex (also called gamma complex) assembles the beta sliding clamp onto the primed template and plays a central role in the organization and communication at the replication fork. The clamp-loading complex contains delta, delta', psi and chi, and 3 copies of either or both of two different DnaX proteins, gamma and tau. The DNA replisome complex has a single clamp loader (3 tau and 1 each of delta, delta', psi and chi subunits) which binds 3 Pol III cores (1 core on the leading strand and 2 on the lagging strand) each with a beta sliding clamp dimer. Additional proteins in the replisome are other copies of gamma, psi (this protein) and chi (holC), SSB, DNA helicase and RNA primase. The clamp loader hydrolyzes ATP to assemble the beta processivity factor onto the primed template and plays a central role in the organization and communication at the replication fork. Interacts directly with the chi subunit (holC).

The catalysed reaction is DNA(n) + a 2'-deoxyribonucleoside 5'-triphosphate = DNA(n+1) + diphosphate. In terms of biological role, part of the beta sliding clamp loading complex, which hydrolyzes ATP to load the beta clamp onto primed DNA to form the DNA replication pre-initiation complex. DNA polymerase III is a complex, multichain enzyme responsible for most of the replicative synthesis in bacteria. This DNA polymerase also exhibits 3' to 5' exonuclease activity. The protein is DNA polymerase III subunit psi of Escherichia coli (strain K12).